Here is a 655-residue protein sequence, read N- to C-terminus: p-hydroxybenzoic acid efflux pump subunit AaeB (655 aa).

11 helical membrane-spanning segments follow: residues 13–33 (FAVK…HFQL), 38–58 (WAVL…GGEP), 69–89 (LRII…ISMI), 93–113 (LLMI…SSLV), 121–141 (WGLS…EPLL), 152–172 (EIVI…PRSI), 370–390 (LFWL…IAVV), 407–427 (FIYG…VIIP), 431–451 (QSML…GIEV), 459–479 (MGAL…TFHF), and 482–502 (FLDS…VILL).

Belongs to the aromatic acid exporter ArAE (TC 2.A.85) family.

The protein localises to the cell inner membrane. Functionally, forms an efflux pump with AaeA. Could function as a metabolic relief valve, allowing to eliminate certain compounds when they accumulate to high levels in the cell. This Salmonella enteritidis PT4 (strain P125109) protein is p-hydroxybenzoic acid efflux pump subunit AaeB.